The sequence spans 424 residues: MAALVALHGVVRRPLLRGLLQEVRCLERSYASKPTLNEVVIVSAIRTPIGSFLGSLASQPATKLGTAAIQGAIEKAGIPKEEVKEVYMGNVIQGGEGQAPTRQATLGAGLPISTPCTTVNKVCASGMKAIMMASQSLMCGHQDVMVAGGMESMSNVPYVMSRGATPYGGVKLEDLIVKDGLTDVYNKIHMGNCAENTAKKMNISRQEQDTYALSSYTRSKEAWDAGKFASEITPITISVKGKPDVVVKEDEEYKRVDFSKVPKLKTVFQKENGTITAANASTLNDGAAALVLMTAEAAQRLNVKPLARIAAFADAAVDPIDFPLAPAYAVPKVLKYAGLKKEDIAMWEVNEAFSVVVLANIKMLEIDPQKVNIHGGAVSLGHPIGMSGARIVVHMAHALKPGEFGLASICNGGGGASALLIEKL.

The transit peptide at 1 to 30 (MAALVALHGVVRRPLLRGLLQEVRCLERSY) directs the protein to the mitochondrion. Lysine 63 bears the N6-acetyllysine; alternate mark. Lysine 63 carries the post-translational modification N6-succinyllysine; alternate. Lysine 75 carries the post-translational modification N6-succinyllysine. Residue cysteine 123 is the Acyl-thioester intermediate of the active site. Residues lysine 171, lysine 178, lysine 187, and lysine 199 each carry the N6-acetyllysine; alternate modification. An N6-succinyllysine; alternate mark is found at lysine 171, lysine 178, lysine 187, and lysine 199. Phosphoserine is present on serine 204. Tyrosine 216 provides a ligand contact to CoA. Position 216 (tyrosine 216) interacts with K(+). Residues lysine 220 and lysine 227 each carry the N6-acetyllysine; alternate modification. Residues lysine 220 and lysine 227 each carry the N6-succinyllysine; alternate modification. Lysine 240 is subject to N6-succinyllysine. Position 242 is an N6-acetyllysine; alternate (lysine 242). Lysine 242 is modified (N6-succinyllysine; alternate). N6-acetyllysine is present on residues lysine 248 and lysine 254. Residues 255–257 (RVD) and lysine 260 contribute to the CoA site. Lysine 260 carries the N6-acetyllysine; alternate modification. Lysine 260 carries the N6-succinyllysine; alternate modification. An N6-succinyllysine mark is found at lysine 263 and lysine 265. Lysine 270 is modified (N6-acetyllysine). K(+)-binding residues include alanine 277, alanine 278, and alanine 280. Serine 281 is a binding site for CoA. The residue at position 335 (lysine 335) is an N6-acetyllysine. Valine 378 is a K(+) binding site. Catalysis depends on cysteine 410, which acts as the Proton donor/acceptor.

It belongs to the thiolase-like superfamily. Thiolase family. As to quaternary structure, homotetramer. Post-translationally, succinylation at Lys-265, adjacent to a coenzyme A binding site. Desuccinylated by SIRT5.

It is found in the mitochondrion. The enzyme catalyses 2 acetyl-CoA = acetoacetyl-CoA + CoA. It carries out the reaction propanoyl-CoA + acetyl-CoA = 2-methyl-3-oxobutanoyl-CoA + CoA. It functions in the pathway lipid metabolism; fatty acid beta-oxidation. Its activity is regulated as follows. Activated by potassium ions, but not sodium ions. This is one of the enzymes that catalyzes the last step of the mitochondrial beta-oxidation pathway, an aerobic process breaking down fatty acids into acetyl-CoA. Using free coenzyme A/CoA, catalyzes the thiolytic cleavage of medium- to long-chain 3-oxoacyl-CoAs into acetyl-CoA and a fatty acyl-CoA shortened by two carbon atoms. The activity of the enzyme is reversible and it can also catalyze the condensation of two acetyl-CoA molecules into acetoacetyl-CoA. Thereby, it plays a major role in ketone body metabolism. In Mus musculus (Mouse), this protein is Acetyl-CoA acetyltransferase, mitochondrial (Acat1).